We begin with the raw amino-acid sequence, 107 residues long: Nucleoid-associated protein XF_1808 (107 aa).

This sequence belongs to the YbaB/EbfC family. Homodimer.

It localises to the cytoplasm. Its subcellular location is the nucleoid. Functionally, binds to DNA and alters its conformation. May be involved in regulation of gene expression, nucleoid organization and DNA protection. This Xylella fastidiosa (strain 9a5c) protein is Nucleoid-associated protein XF_1808.